A 416-amino-acid polypeptide reads, in one-letter code: Protein MID1-COMPLEMENTING ACTIVITY 2 (416 aa).

Positions 191-219 (CEALKTEEEKLQLELQRSRARYDADQCEV) form a coiled coil. The chain crosses the membrane as a helical span at residues 338–354 (LIVYSLILSCCCYTCCI).

In terms of tissue distribution, expressed in roots, leaves, stems, flowers and siliques. In the root, high levels of expression in vascular tissues, in the stele and endodermis, but no expression in the cortex, epidermis, root cap, promeristem and adjacent elongation zone of the primary root. Not expressed in root hairs. Detected in shoot apical meristem, leaf mesophyll cells and vascular tissues, upper half of inflorescence, but not in petioles of rosette leaves.

It localises to the cell membrane. Inhibited by GdCl(3), but not by verapamil. In terms of biological role, calcium-permeable stretch-activated channel component. Probably involved in mechanosensing and in mechano-stimulated calcium uptake mechanism. The chain is Protein MID1-COMPLEMENTING ACTIVITY 2 (MCA2) from Arabidopsis thaliana (Mouse-ear cress).